Here is a 426-residue protein sequence, read N- to C-terminus: UPF0329 protein ECU06_0040 (426 aa).

The segment covering 136–172 has biased composition (basic and acidic residues); that stretch reads RQRKREEETERSVKELVGDEEKAKSKEEKAKSKEEKA. Residues 136 to 230 form a disordered region; the sequence is RQRKREEETE…GGKKKSKGGR (95 aa). Basic residues predominate over residues 220–230; it reads KGGKKKSKGGR.

This sequence belongs to the UPF0329 family.

The protein is UPF0329 protein ECU06_0040 of Encephalitozoon cuniculi (strain GB-M1) (Microsporidian parasite).